The chain runs to 284 residues: NAD kinase (284 aa).

The Proton acceptor role is filled by aspartate 70. NAD(+)-binding positions include 70 to 71 (DG), 139 to 140 (NE), lysine 167, aspartate 169, leucine 177, 180 to 185 (TAYNLS), and glutamine 236.

The protein belongs to the NAD kinase family. The cofactor is a divalent metal cation.

It localises to the cytoplasm. The catalysed reaction is NAD(+) + ATP = ADP + NADP(+) + H(+). Its function is as follows. Involved in the regulation of the intracellular balance of NAD and NADP, and is a key enzyme in the biosynthesis of NADP. Catalyzes specifically the phosphorylation on 2'-hydroxyl of the adenosine moiety of NAD to yield NADP. This is NAD kinase from Helicobacter pylori (strain P12).